We begin with the raw amino-acid sequence, 543 residues long: CTP synthase (543 aa).

The tract at residues 1–265 (MTRFVFITGG…DQEVLRYFDL (265 aa)) is amidoligase domain. Residue Ser-13 participates in CTP binding. UTP is bound at residue Ser-13. 14–19 (SLGKGI) contacts ATP. Tyr-54 provides a ligand contact to L-glutamine. Asp-71 lines the ATP pocket. Residues Asp-71 and Glu-139 each contribute to the Mg(2+) site. Residues 146 to 148 (DIE), 186 to 191 (KTKPTQ), and Lys-222 contribute to the CTP site. UTP-binding positions include 186 to 191 (KTKPTQ) and Lys-222. One can recognise a Glutamine amidotransferase type-1 domain in the interval 291-542 (RVAIVGKYTA…IAAAVKEAHR (252 aa)). Gly-354 contacts L-glutamine. Residue Cys-381 is the Nucleophile; for glutamine hydrolysis of the active site. L-glutamine contacts are provided by residues 382–385 (FGMQ), Glu-405, and Arg-470. Catalysis depends on residues His-515 and Glu-517.

The protein belongs to the CTP synthase family. In terms of assembly, homotetramer.

It catalyses the reaction UTP + L-glutamine + ATP + H2O = CTP + L-glutamate + ADP + phosphate + 2 H(+). The catalysed reaction is L-glutamine + H2O = L-glutamate + NH4(+). It carries out the reaction UTP + NH4(+) + ATP = CTP + ADP + phosphate + 2 H(+). It participates in pyrimidine metabolism; CTP biosynthesis via de novo pathway; CTP from UDP: step 2/2. Its activity is regulated as follows. Allosterically activated by GTP, when glutamine is the substrate; GTP has no effect on the reaction when ammonia is the substrate. The allosteric effector GTP functions by stabilizing the protein conformation that binds the tetrahedral intermediate(s) formed during glutamine hydrolysis. Inhibited by the product CTP, via allosteric rather than competitive inhibition. Catalyzes the ATP-dependent amination of UTP to CTP with either L-glutamine or ammonia as the source of nitrogen. Regulates intracellular CTP levels through interactions with the four ribonucleotide triphosphates. In Gluconobacter oxydans (strain 621H) (Gluconobacter suboxydans), this protein is CTP synthase.